Consider the following 427-residue polypeptide: Cholecystokinin receptor type A (427 aa).

The Extracellular portion of the chain corresponds to 1–41; the sequence is MDAVASLLGNASGIPPPCELGLDNETLFCLDQPPPSKEWQP. N-linked (GlcNAc...) asparagine glycans are attached at residues N10 and N24. C18 and C29 are disulfide-bonded. Residues 42–67 traverse the membrane as a helical segment; that stretch reads AVQILLYSLIFLLSVLGNTLVITVLI. Over 68-77 the chain is Cytoplasmic; sequence RNKRMRTVTN. The chain crosses the membrane as a helical span at residues 78 to 104; it reads IFLLSLAISDLMLCLFCMPFNLIPNLL. Residues 105 to 115 are Extracellular-facing; that stretch reads KDFIFGSALCK. C114 and C196 are disulfide-bonded. Residues 116 to 137 form a helical membrane-spanning segment; sequence TTTYLMGTSVSVSTLNLVAISL. Topologically, residues 138-157 are cytoplasmic; it reads ERYGAICKPLQSRVWQTKSH. A helical transmembrane segment spans residues 158-178; the sequence is ALKVIAATWCLSFAIMTPYPI. The Extracellular portion of the chain corresponds to 179-210; it reads YSNLVPFTKTNNQTANMCRFLLPSDVMQQAWH. An N-linked (GlcNAc...) asparagine glycan is attached at N190. Residues 211 to 234 form a helical membrane-spanning segment; it reads TFLLLILFLIPGIVMMVAYGMISL. Residues 235–312 lie on the Cytoplasmic side of the membrane; it reads ELYQGIKFDA…TLMAKKRVIR (78 aa). Residues 313-333 form a helical membrane-spanning segment; it reads MLMVIVVLFFLCWMPIFSANA. Residues 334–348 are Extracellular-facing; it reads WRAYDTVSAERRLSG. A helical transmembrane segment spans residues 349 to 372; that stretch reads TPISFILLLSYTSSCVNPIIYCFM. At 373–427 the chain is on the cytoplasmic side; it reads NRRFRLGFMATFPCCPNPGPPGPRAEAGEEEEGRTTRASLSRYSYSHMSASAPPS. The S-palmitoyl cysteine moiety is linked to residue C386. The interval 391-427 is disordered; sequence GPPGPRAEAGEEEEGRTTRASLSRYSYSHMSASAPPS. Residues 411-421 show a composition bias toward polar residues; the sequence is SLSRYSYSHMS.

The protein belongs to the G-protein coupled receptor 1 family.

The protein localises to the cell membrane. Receptor for cholecystokinin. Mediates pancreatic growth and enzyme secretion, smooth muscle contraction of the gall bladder and stomach. Has a 1000-fold higher affinity for CCK rather than for gastrin. It modulates feeding and dopamine-induced behavior in the central and peripheral nervous system. This receptor mediates its action by association with G proteins that activate a phosphatidylinositol-calcium second messenger system. The chain is Cholecystokinin receptor type A (CCKAR) from Oryctolagus cuniculus (Rabbit).